Consider the following 194-residue polypeptide: Alkyl hydroperoxide reductase AhpD (194 aa).

Residue cysteine 132 is the Proton donor of the active site. A disulfide bridge connects residues cysteine 132 and cysteine 135. The active-site Cysteine sulfenic acid (-SOH) intermediate is cysteine 135.

The protein belongs to the AhpD family.

The catalysed reaction is N(6)-[(R)-dihydrolipoyl]-L-lysyl-[lipoyl-carrier protein] + a hydroperoxide = N(6)-[(R)-lipoyl]-L-lysyl-[lipoyl-carrier protein] + an alcohol + H2O. Functionally, antioxidant protein with alkyl hydroperoxidase activity. Required for the reduction of the AhpC active site cysteine residues and for the regeneration of the AhpC enzyme activity. The polypeptide is Alkyl hydroperoxide reductase AhpD (Koribacter versatilis (strain Ellin345)).